The following is an 89-amino-acid chain: Small ribosomal subunit protein uS15 (89 aa).

The protein belongs to the universal ribosomal protein uS15 family. In terms of assembly, part of the 30S ribosomal subunit. Forms a bridge to the 50S subunit in the 70S ribosome, contacting the 23S rRNA.

Functionally, one of the primary rRNA binding proteins, it binds directly to 16S rRNA where it helps nucleate assembly of the platform of the 30S subunit by binding and bridging several RNA helices of the 16S rRNA. Its function is as follows. Forms an intersubunit bridge (bridge B4) with the 23S rRNA of the 50S subunit in the ribosome. The protein is Small ribosomal subunit protein uS15 of Acinetobacter baylyi (strain ATCC 33305 / BD413 / ADP1).